Here is a 123-residue protein sequence, read N- to C-terminus: MPRLEPGMARIRVKDLRLRTFIGIKEEEILNKQDVLINLTILYPAADAVEVNDIEHALNYRTITKAIIRHVEENRFALLERMTQEILDLVMENPAVRYAEVEVDKPHALRFAESVSITLAGHR.

The protein belongs to the DHNA family. As to quaternary structure, homooctamer. Dimer of tetramers.

The enzyme catalyses 7,8-dihydroneopterin 3'-triphosphate = 7,8-dihydromonapterin 3'-triphosphate. Functionally, catalyzes the epimerization of carbon 2' of the side chain of 7,8-dihydroneopterin triphosphate (H2NTP) to form 7,8-dihydromonapterin triphosphate (H2MTP). Is required for tetrahydromonapterin biosynthesis. The chain is Dihydroneopterin triphosphate 2'-epimerase from Pseudomonas aeruginosa (strain ATCC 15692 / DSM 22644 / CIP 104116 / JCM 14847 / LMG 12228 / 1C / PRS 101 / PAO1).